We begin with the raw amino-acid sequence, 138 residues long: Large ribosomal subunit protein bL19 (138 aa).

The protein belongs to the bacterial ribosomal protein bL19 family.

Its function is as follows. This protein is located at the 30S-50S ribosomal subunit interface and may play a role in the structure and function of the aminoacyl-tRNA binding site. The polypeptide is Large ribosomal subunit protein bL19 (Leptospira interrogans serogroup Icterohaemorrhagiae serovar Lai (strain 56601)).